The chain runs to 276 residues: Integrin-binding sialoprotein (276 aa).

The signal sequence occupies residues 1–16 (MRSALLLACLLATASA). A disordered region spans residues 54–251 (HRYKGSDSSE…EEPARGDSYR (198 aa)). Residues 61 to 75 (SSEEEGDGSEEEEEG) show a composition bias toward acidic residues. Positions 106-119 (QDCKGGQKGTRGDS) are enriched in basic and acidic residues. The Cell attachment site signature appears at 116-118 (RGD). A compositionally biased stretch (acidic residues) spans 120-144 (GDEDSDEEEEEEEEEEEEEEVEEQD). The span at 145-165 (VSVNGTSTNTTAETPHGNNTV) shows a compositional bias: polar residues. 3 N-linked (GlcNAc...) asparagine glycosylation sites follow: Asn148, Asn153, and Asn162. Residues 167–188 (AEEEEDDDEEEEEEEEEEEEAE) are compositionally biased toward acidic residues. The segment covering 189–200 (ATTAAATTAQDE) has biased composition (low complexity). The Cell attachment site motif lies at 228-230 (RGD). The short motif at 246–248 (RGD) is the Integrin-binding motif element. 2 positions are modified to sulfotyrosine: Tyr272 and Tyr273.

In terms of assembly, monomer. Interacts with integrins; the interaction promotes cell adhesion. Phosphorylated on serine and threonine residues.

It localises to the secreted. Its function is as follows. Binds tightly to hydroxyapatite. Appears to form an integral part of the mineralized matrix. Probably important to cell-matrix interaction. Promotes adhesion and migration of various cells via the alpha-V/beta-3 integrin receptor (ITGAV:ITGB3). The protein is Integrin-binding sialoprotein (IBSP) of Gallus gallus (Chicken).